Reading from the N-terminus, the 445-residue chain is tRNA-2-methylthio-N(6)-dimethylallyladenosine synthase (445 aa).

The MTTase N-terminal domain maps to 2-119 (KKLYIRTFGC…LPQLIAERRH (118 aa)). 6 residues coordinate [4Fe-4S] cluster: cysteine 11, cysteine 48, cysteine 82, cysteine 156, cysteine 160, and cysteine 163. The Radical SAM core domain occupies 142 to 378 (RVEGASAFVS…RIDQQAQAIS (237 aa)). Positions 379–442 (QAMVGRVERA…PHSLRGEIVT (64 aa)) constitute a TRAM domain.

The protein belongs to the methylthiotransferase family. MiaB subfamily. Monomer. The cofactor is [4Fe-4S] cluster.

Its subcellular location is the cytoplasm. The catalysed reaction is N(6)-dimethylallyladenosine(37) in tRNA + (sulfur carrier)-SH + AH2 + 2 S-adenosyl-L-methionine = 2-methylsulfanyl-N(6)-dimethylallyladenosine(37) in tRNA + (sulfur carrier)-H + 5'-deoxyadenosine + L-methionine + A + S-adenosyl-L-homocysteine + 2 H(+). Catalyzes the methylthiolation of N6-(dimethylallyl)adenosine (i(6)A), leading to the formation of 2-methylthio-N6-(dimethylallyl)adenosine (ms(2)i(6)A) at position 37 in tRNAs that read codons beginning with uridine. In Aromatoleum aromaticum (strain DSM 19018 / LMG 30748 / EbN1) (Azoarcus sp. (strain EbN1)), this protein is tRNA-2-methylthio-N(6)-dimethylallyladenosine synthase.